Reading from the N-terminus, the 178-residue chain is uncharacterized protein (178 aa).

The helical transmembrane segment at leucine 7–glutamate 27 threads the bilayer.

The protein localises to the membrane. This is an uncharacterized protein from Methanocaldococcus jannaschii (strain ATCC 43067 / DSM 2661 / JAL-1 / JCM 10045 / NBRC 100440) (Methanococcus jannaschii).